The sequence spans 290 residues: Arylamine N-acetyltransferase 2 (290 aa).

Cys68 acts as the Acyl-thioester intermediate in catalysis. CoA is bound by residues Thr103 and Gly104. 106-107 (VH) lines the substrate pocket. Catalysis depends on residues His107 and Asp122. 3 residues coordinate CoA: Tyr208, Thr214, and Ser287.

It belongs to the arylamine N-acetyltransferase family.

Its subcellular location is the cytoplasm. It catalyses the reaction an arylamine + acetyl-CoA = an N-acetylarylamine + CoA. The enzyme catalyses an N-hydroxyarylamine + acetyl-CoA = an N-acetoxyarylamine + CoA. Catalyzes the N- or O-acetylation of various arylamine and heterocyclic amine substrates. Participates in the detoxification of a plethora of hydrazine and arylamine drugs, and is able to bioactivate several known carcinogens. This Homo sapiens (Human) protein is Arylamine N-acetyltransferase 2 (NAT2).